The following is a 238-amino-acid chain: 1-(5-phosphoribosyl)-5-[(5-phosphoribosylamino)methylideneamino] imidazole-4-carboxamide isomerase (238 aa).

The active-site Proton acceptor is the D8. D129 (proton donor) is an active-site residue.

It belongs to the HisA/HisF family.

Its subcellular location is the cytoplasm. It catalyses the reaction 1-(5-phospho-beta-D-ribosyl)-5-[(5-phospho-beta-D-ribosylamino)methylideneamino]imidazole-4-carboxamide = 5-[(5-phospho-1-deoxy-D-ribulos-1-ylimino)methylamino]-1-(5-phospho-beta-D-ribosyl)imidazole-4-carboxamide. It functions in the pathway amino-acid biosynthesis; L-histidine biosynthesis; L-histidine from 5-phospho-alpha-D-ribose 1-diphosphate: step 4/9. The polypeptide is 1-(5-phosphoribosyl)-5-[(5-phosphoribosylamino)methylideneamino] imidazole-4-carboxamide isomerase (Myxococcus xanthus (strain DK1622)).